The following is a 209-amino-acid chain: Flavin prenyltransferase UbiX (209 aa).

FMN is bound by residues Gly-13–Ser-15, Ser-39, Ser-104–Thr-107, Cys-116, and Arg-139. Dimethylallyl phosphate-binding residues include Tyr-169 and Arg-185.

It belongs to the UbiX/PAD1 family.

The catalysed reaction is dimethylallyl phosphate + FMNH2 = prenylated FMNH2 + phosphate. Flavin prenyltransferase that catalyzes the synthesis of the prenylated FMN cofactor (prenyl-FMN) for 4-hydroxy-3-polyprenylbenzoic acid decarboxylase UbiD. The prenyltransferase is metal-independent and links a dimethylallyl moiety from dimethylallyl monophosphate (DMAP) to the flavin N5 and C6 atoms of FMN. In Pseudomonas aeruginosa (strain ATCC 15692 / DSM 22644 / CIP 104116 / JCM 14847 / LMG 12228 / 1C / PRS 101 / PAO1), this protein is Flavin prenyltransferase UbiX.